Reading from the N-terminus, the 493-residue chain is Alpha-amylase-related protein (493 aa).

The N-terminal stretch at Met-1–Ala-19 is a signal peptide. Gln-20 is modified (pyrrolidone carboxylic acid). Cysteines 47 and 103 form a disulfide. Ca(2+) is bound by residues Asn-117, Gln-168, and Asp-177. A disulfide bridge links Cys-156 with Cys-170. Arg-205 contacts chloride. Catalysis depends on Asp-207, which acts as the Nucleophile. His-211 lines the Ca(2+) pocket. Glu-244 functions as the Proton donor in the catalytic mechanism. Chloride-binding residues include Asn-307 and Arg-342. Intrachain disulfides connect Cys-375-Cys-381, Cys-417-Cys-440, and Cys-447-Cys-459.

Belongs to the glycosyl hydrolase 13 family. As to quaternary structure, monomer. Requires Ca(2+) as cofactor. Chloride serves as cofactor. Midgut and fat body.

Its subcellular location is the secreted. It carries out the reaction Endohydrolysis of (1-&gt;4)-alpha-D-glucosidic linkages in polysaccharides containing three or more (1-&gt;4)-alpha-linked D-glucose units.. The polypeptide is Alpha-amylase-related protein (Amyrel) (Drosophila melanogaster (Fruit fly)).